Consider the following 620-residue polypeptide: Chaperone protein HscA homolog (620 aa).

The protein belongs to the heat shock protein 70 family.

Its function is as follows. Chaperone involved in the maturation of iron-sulfur cluster-containing proteins. Has a low intrinsic ATPase activity which is markedly stimulated by HscB. The chain is Chaperone protein HscA homolog from Shewanella putrefaciens (strain CN-32 / ATCC BAA-453).